The primary structure comprises 745 residues: Protein PHOX1 (745 aa).

The segment covering 1–10 has biased composition (basic residues); that stretch reads MGKPTGKKKN. The segment at 1–37 is disordered; the sequence is MGKPTGKKKNNNYTEMPPTESSTTGGGKTGKSFDRSA. 3 TPR repeats span residues 52–85, 90–125, and 126–159; these read ALEL…LPRD, AYLR…SPRF, and SKAL…EPEN. In terms of domain architecture, PB1 spans 280-359; the sequence is TRTVKLVHGD…GSFRLYIAEV (80 aa). TPR repeat units lie at residues 406–441, 443–472, 494–528, and 553–586; these read EHWI…YTEA, EDIV…AMFN, ETIL…KSDF, and GEVD…WEEM.

Interacts with myosin XI-1 and XI-K.

Its subcellular location is the cytoplasmic vesicle membrane. Carboxylate clamp type tetratricopeptide repeat protein that may act as a potential Hsp90/Hsp70 co-chaperone. Contributes to polar growth of root hairs. This Arabidopsis thaliana (Mouse-ear cress) protein is Protein PHOX1.